The chain runs to 347 residues: Methionine import ATP-binding protein MetN (347 aa).

The ABC transporter domain maps to 2–241 (IKLEGVSKTY…PATRLGRDFL (240 aa)). 38-45 (GLSGAGKS) lines the ATP pocket.

The protein belongs to the ABC transporter superfamily. Methionine importer (TC 3.A.1.24) family. In terms of assembly, the complex is composed of two ATP-binding proteins (MetN), two transmembrane proteins (MetI) and a solute-binding protein (MetQ).

It is found in the cell inner membrane. The catalysed reaction is L-methionine(out) + ATP + H2O = L-methionine(in) + ADP + phosphate + H(+). It catalyses the reaction D-methionine(out) + ATP + H2O = D-methionine(in) + ADP + phosphate + H(+). Functionally, part of the ABC transporter complex MetNIQ involved in methionine import. Responsible for energy coupling to the transport system. This chain is Methionine import ATP-binding protein MetN, found in Chromohalobacter salexigens (strain ATCC BAA-138 / DSM 3043 / CIP 106854 / NCIMB 13768 / 1H11).